The chain runs to 293 residues: Oxidoreductase clz16 (293 aa).

This sequence belongs to the asaB hydroxylase/desaturase family.

It participates in secondary metabolite biosynthesis. Functionally, oxidoreductase; part of the gene cluster that mediates the biosynthesis of squalestatin S1 (SQS1, also known as zaragozic acid A), a heavily oxidized fungal polyketide that offers potent cholesterol lowering activity by targeting squalene synthase (SS). SQS1 is composed of a 2,8-dioxobicyclic[3.2.1]octane-3,4,5-tricarboxyclic acid core that is connected to two lipophilic polyketide arms. These initial steps feature the priming of an unusual benzoic acid starter unit onto the highly reducing polyketide synthase clz14, followed by oxaloacetate extension and product release to generate a tricarboxylic acid containing product. The phenylalanine ammonia lyase (PAL) clz10 and the acyl-CoA ligase clz12 are involved in transforming phenylalanine into benzoyl-CoA. The citrate synthase-like protein clz17 is involved in connecting the C-alpha-carbons of the hexaketide chain and oxaloacetate to afford the tricarboxylic acid unit. The potential hydrolytic enzymes, clz11 and clz13, are in close proximity to pks2 and may participate in product release. On the other side, the tetraketide arm is synthesized by a the squalestatin tetraketide synthase clz2 and enzymatically esterified to the core in the last biosynthetic step, by the acetyltransferase clz6. The biosynthesis of the tetraketide must involve 3 rounds of chain extension. After the first and second rounds methyl-transfer occurs, and in all rounds of extension the ketoreductase and dehydratase are active. The enoyl reductase and C-MeT of clz2 are not active in the final round of extension. The acetyltransferase clz6 appears to have a broad substrate selectivity for its acyl CoA substrate, allowing the in vitro synthesis of novel squalestatins. The biosynthesis of SQS1 requires several oxidative steps likely performed by oxidoreductases clz3, clz15 and clz16. Finally, in support of the identification of the cluster as being responsible for SQS1 production, the cluster contains a gene encoding a putative squalene synthase (SS) clz20, suggesting a likely mechanism for self-resistance. The sequence is that of Oxidoreductase clz16 from Cochliobolus lunatus (Filamentous fungus).